The sequence spans 112 residues: Putative pterin-4-alpha-carbinolamine dehydratase (112 aa).

Belongs to the pterin-4-alpha-carbinolamine dehydratase family.

It carries out the reaction (4aS,6R)-4a-hydroxy-L-erythro-5,6,7,8-tetrahydrobiopterin = (6R)-L-erythro-6,7-dihydrobiopterin + H2O. This Shewanella piezotolerans (strain WP3 / JCM 13877) protein is Putative pterin-4-alpha-carbinolamine dehydratase.